Reading from the N-terminus, the 350-residue chain is Methionine import ATP-binding protein MetN (350 aa).

The region spanning 9–245 is the ABC transporter domain; it reads LKDVDVEFHG…PQQQLTKDFI (237 aa). ATP is bound at residue 43–50; the sequence is GYSGAGKS.

The protein belongs to the ABC transporter superfamily. Methionine importer (TC 3.A.1.24) family. As to quaternary structure, the complex is composed of two ATP-binding proteins (MetN), two transmembrane proteins (MetI) and a solute-binding protein (MetQ).

It localises to the cell membrane. The catalysed reaction is L-methionine(out) + ATP + H2O = L-methionine(in) + ADP + phosphate + H(+). It catalyses the reaction D-methionine(out) + ATP + H2O = D-methionine(in) + ADP + phosphate + H(+). Part of the ABC transporter complex MetNIQ involved in methionine import. Responsible for energy coupling to the transport system. The protein is Methionine import ATP-binding protein MetN of Lacticaseibacillus paracasei (strain ATCC 334 / BCRC 17002 / CCUG 31169 / CIP 107868 / KCTC 3260 / NRRL B-441) (Lactobacillus paracasei).